Reading from the N-terminus, the 122-residue chain is Large ribosomal subunit protein uL14 (122 aa).

It belongs to the universal ribosomal protein uL14 family. Part of the 50S ribosomal subunit. Forms a cluster with proteins L3 and L19. In the 70S ribosome, L14 and L19 interact and together make contacts with the 16S rRNA in bridges B5 and B8.

Functionally, binds to 23S rRNA. Forms part of two intersubunit bridges in the 70S ribosome. In Mycolicibacterium gilvum (strain PYR-GCK) (Mycobacterium gilvum (strain PYR-GCK)), this protein is Large ribosomal subunit protein uL14.